A 253-amino-acid polypeptide reads, in one-letter code: Histone-arginine methyltransferase METTL23 (253 aa).

Residues 1–23 (MDSVRPRAPWAPPPDPASLDSPT) form a disordered region.

This sequence belongs to the methyltransferase superfamily. METTL23 family. Interacts with HSPA5, HSP90B1, TUBULIN, UGGT1 and UGGT2. Interacts with TET3. Interacts with STPG4. As to expression, ubiquitously expressed.

It is found in the nucleus. It localises to the cytoplasm. The catalysed reaction is L-arginyl-[protein] + 2 S-adenosyl-L-methionine = N(omega),N(omega)-dimethyl-L-arginyl-[protein] + 2 S-adenosyl-L-homocysteine + 2 H(+). Functionally, histone methyltransferase that dimethylates histone H3 at 'Arg-17', forming asymmetric dimethylarginine (H3R17me2a), leading to activate transcription via chromatin remodeling. Maternal factor involved in epigenetic chromatin reprogramming of the paternal genome in the zygote: mediates H3R17me2a, promoting histone H3.3 incorporation in the male pronucleus, leading to TET3 recruitment and subsequent DNA demethylation. The protein is Histone-arginine methyltransferase METTL23 of Mus musculus (Mouse).